The chain runs to 258 residues: Probable F-box protein At2g29610 (258 aa).

The disordered stretch occupies residues 1–25; it reads MVELSEIPGDPNGADPNNNPQEEDE. The span at 8–20 shows a compositional bias: low complexity; sequence PGDPNGADPNNNP. Positions 28–74 constitute an F-box domain; the sequence is LPILLQLPEELIERIIAHFPQCYSPSPILVCETFRQVINSDHFYYVT.

This Arabidopsis thaliana (Mouse-ear cress) protein is Probable F-box protein At2g29610.